The sequence spans 755 residues: Metabotropic glutamate receptor-like protein B (755 aa).

Residues 1 to 23 (MKNLISIILLILIFFNYSKFVKS) form the signal peptide. Residues asparagine 16, asparagine 183, and asparagine 273 are each glycosylated (N-linked (GlcNAc...) asparagine). Residues 24–385 (KNCKIAVLLS…VDYSSSMKLG (362 aa)) are Extracellular-facing. A helical transmembrane segment spans residues 386–406 (ITITSSICIFLCIISIIIVLV). The Cytoplasmic segment spans residues 407 to 417 (FRTARIIKSAS). A helical membrane pass occupies residues 418–438 (PAFLFLILMGCILIFIGCIIF). The Extracellular portion of the chain corresponds to 439 to 455 (SQSPNEGTCRARVWLLS). Residues 456 to 476 (IGYTIFLGSLLVKNWRIWLLF) traverse the membrane as a helical segment. Residues 477-492 (DNPKLKKRSITNWKLY) are Cytoplasmic-facing. The chain crosses the membrane as a helical span at residues 493-513 (PWVAGILAADVLILAFWQGLG). At 514 to 541 (NIRSESRIGIDSLTKYQYTNVCSSNDQG) the chain is on the extracellular side. Residues 542 to 562 (SIALYILLVFHGIKLLVACFI) form a helical membrane-spanning segment. Over 563-578 (SFKIKVVDIDEFNESK) the chain is Cytoplasmic. The chain crosses the membrane as a helical span at residues 579 to 599 (PIASSVYIITFCLFIVIPLMV). Topologically, residues 600–607 (SPQSVTSQ) are extracellular. Residues 608 to 628 (VTTICVCAIVTTLISIILLFG) form a helical membrane-spanning segment. Residues 629-755 (SKFYKMITQG…GEVEIDSNNL (127 aa)) are Cytoplasmic-facing. Disordered regions lie at residues 656 to 676 (QSLEKKKTGEEDDSESSEENG) and 691 to 729 (FSSDTEDDENETQQIDEEKDEQIAGSNEDIIQPEENIEE). Positions 694-710 (DTEDDENETQQIDEEKD) are enriched in acidic residues.

The protein in the N-terminal section; belongs to the BMP lipoprotein family. It in the C-terminal section; belongs to the G-protein coupled receptor 3 family. GABA-B receptor subfamily.

The protein resides in the membrane. The protein is Metabotropic glutamate receptor-like protein B (grlB) of Dictyostelium discoideum (Social amoeba).